The chain runs to 365 residues: ADP-ribosylhydrolase ARH3 (365 aa).

The Mg(2+) site is built by glutamate 42, threonine 77, aspartate 78, and aspartate 79. Aspartate 78 is a substrate binding site. Residues 147–153 (KGSYGNG), histidine 183, leucine 236, and isoleucine 272 each bind substrate. Aspartate 315, aspartate 317, and threonine 318 together coordinate Mg(2+).

Belongs to the ADP-ribosylglycohydrolase family. As to quaternary structure, monomer. Requires Mg(2+) as cofactor.

It localises to the nucleus. The protein localises to the cytoplasm. Its subcellular location is the chromosome. The protein resides in the mitochondrion matrix. The enzyme catalyses [(1''-&gt;2')-ADP-alpha-D-ribose](n) + H2O = [(1''-&gt;2')-ADP-alpha-D-ribose](n-1) + ADP-D-ribose. It carries out the reaction 1''-O-acetyl-ADP-alpha-D-ribose + H2O = ADP-D-ribose + acetate + H(+). The catalysed reaction is O-(ADP-D-ribosyl)-L-seryl-[protein] + H2O = ADP-D-ribose + L-seryl-[protein]. It catalyses the reaction alpha-NAD(+) + H2O = ADP-D-ribose + nicotinamide + H(+). Its activity is regulated as follows. The protein undergoes a dramatic conformational switch from closed to open states upon substrate-binding, which enables specific substrate recognition for the 1''-O-linkage. The glutamate flap (Glu-42) blocks substrate entrance to Mg(2+) in the unliganded closed state. In presence of substrate, Glu-42 is ejected from the active site: this closed-to-open transition significantly widens the substrate-binding channel and precisely positions the scissile 1''-O-linkage for cleavage while securing tightly 2'- and 3'-hydroxyls of ADP-ribose. ADP-ribosylhydrolase that preferentially hydrolyzes the scissile alpha-O-linkage attached to the anomeric C1'' position of ADP-ribose and acts on different substrates, such as proteins ADP-ribosylated on serine and threonine, free poly(ADP-ribose) and O-acetyl-ADP-D-ribose. Specifically acts as a serine mono-ADP-ribosylhydrolase by mediating the removal of mono-ADP-ribose attached to serine residues on proteins, thereby playing a key role in DNA damage response. Serine ADP-ribosylation of proteins constitutes the primary form of ADP-ribosylation of proteins in response to DNA damage. Does not hydrolyze ADP-ribosyl-arginine, -cysteine, -diphthamide, or -asparagine bonds. Also able to degrade protein free poly(ADP-ribose), which is synthesized in response to DNA damage: free poly(ADP-ribose) acts as a potent cell death signal and its degradation by ADPRHL2 protects cells from poly(ADP-ribose)-dependent cell death, a process named parthanatos. Also hydrolyzes free poly(ADP-ribose) in mitochondria. Specifically digests O-acetyl-ADP-D-ribose, a product of deacetylation reactions catalyzed by sirtuins. Specifically degrades 1''-O-acetyl-ADP-D-ribose isomer, rather than 2''-O-acetyl-ADP-D-ribose or 3''-O-acetyl-ADP-D-ribose isomers. This Bos taurus (Bovine) protein is ADP-ribosylhydrolase ARH3 (ADPRS).